The following is a 167-amino-acid chain: Small ribosomal subunit protein uS5 (167 aa).

Residues 12-75 (LEDQVVSINR…DAAKKSLIEV (64 aa)) enclose the S5 DRBM domain.

The protein belongs to the universal ribosomal protein uS5 family. Part of the 30S ribosomal subunit. Contacts proteins S4 and S8.

In terms of biological role, with S4 and S12 plays an important role in translational accuracy. Located at the back of the 30S subunit body where it stabilizes the conformation of the head with respect to the body. The chain is Small ribosomal subunit protein uS5 from Lacticaseibacillus paracasei (strain ATCC 334 / BCRC 17002 / CCUG 31169 / CIP 107868 / KCTC 3260 / NRRL B-441) (Lactobacillus paracasei).